The chain runs to 451 residues: 3-phosphoshikimate 1-carboxyvinyltransferase (451 aa).

K28, S29, and R33 together coordinate 3-phosphoshikimate. K28 serves as a coordination point for phosphoenolpyruvate. Phosphoenolpyruvate is bound by residues G105 and R133. 3-phosphoshikimate is bound by residues S178, Q180, D331, and K358. Q180 lines the phosphoenolpyruvate pocket. D331 functions as the Proton acceptor in the catalytic mechanism. Phosphoenolpyruvate is bound by residues R362 and R406.

Belongs to the EPSP synthase family. In terms of assembly, monomer.

The protein localises to the cytoplasm. It carries out the reaction 3-phosphoshikimate + phosphoenolpyruvate = 5-O-(1-carboxyvinyl)-3-phosphoshikimate + phosphate. The protein operates within metabolic intermediate biosynthesis; chorismate biosynthesis; chorismate from D-erythrose 4-phosphate and phosphoenolpyruvate: step 6/7. Functionally, catalyzes the transfer of the enolpyruvyl moiety of phosphoenolpyruvate (PEP) to the 5-hydroxyl of shikimate-3-phosphate (S3P) to produce enolpyruvyl shikimate-3-phosphate and inorganic phosphate. The protein is 3-phosphoshikimate 1-carboxyvinyltransferase of Rhodospirillum rubrum (strain ATCC 11170 / ATH 1.1.1 / DSM 467 / LMG 4362 / NCIMB 8255 / S1).